Reading from the N-terminus, the 100-residue chain is Large ribosomal subunit protein bL27 (100 aa).

Residues 1–9 constitute a propeptide that is removed on maturation; it reads MLKMNLQLF.

Belongs to the bacterial ribosomal protein bL27 family. The N-terminus is cleaved by ribosomal processing cysteine protease Prp.

The protein is Large ribosomal subunit protein bL27 of Clostridium perfringens (strain ATCC 13124 / DSM 756 / JCM 1290 / NCIMB 6125 / NCTC 8237 / Type A).